Consider the following 417-residue polypeptide: Phosphoglycerate kinase 2 (417 aa).

Ser2 bears the N-acetylserine mark. Phosphoserine is present on residues Ser2 and Ser4. Lys11 bears the N6-acetyllysine mark. Val23, Asp24, Phe25, Asn26, Gln38, and Arg39 together coordinate (2R)-3-phosphoglycerate. Lys48 is modified (N6-acetyllysine). (2R)-3-phosphoglycerate contacts are provided by Ser62, His63, Gly65, and Arg66. N6-acetyllysine occurs at positions 75, 86, and 97. Residues Leu122 and Arg123 each contribute to the (2R)-3-phosphoglycerate site. Lys131 and Lys146 each carry N6-acetyllysine. (2R)-3-phosphoglycerate-binding residues include His170 and Arg171. Tyr196 is modified (phosphotyrosine). Lys199 is subject to N6-acetyllysine. Gly214 is a binding site for ADP. Gly214 is a CDP binding site. Residues Ala215 and Lys216 each coordinate AMP. Ala215 lines the ATP pocket. Ala215 is a binding site for Mg(2+). Positions 218 and 219 each coordinate Mg(2+). Asp219 lines the CDP pocket. Lys220 is an AMP binding site. ATP is bound at residue Lys220. Gly238 is a binding site for ADP. A CDP-binding site is contributed by Gly238. An AMP-binding site is contributed by Gly239. Position 239 (Gly239) interacts with ATP. N6-acetyllysine is present on residues Lys267 and Lys291. An AMP-binding site is contributed by Gly313. Gly313 serves as a coordination point for ATP. Gly338 and Phe343 together coordinate CDP. Phe343 is a binding site for ADP. An AMP-binding site is contributed by Glu344. Residues Glu344, Asp375, and Thr376 each coordinate ATP. A Mg(2+)-binding site is contributed by Asp375.

This sequence belongs to the phosphoglycerate kinase family. As to quaternary structure, monomer. Mg(2+) is required as a cofactor. Mainly found in round spermatids. Localized on the principle piece in the sperm (at protein level). Testis-specific. Expression significantly decreased in the testis of elderly men.

Its subcellular location is the cytoplasm. It catalyses the reaction (2R)-3-phosphoglycerate + ATP = (2R)-3-phospho-glyceroyl phosphate + ADP. Its pathway is carbohydrate degradation; glycolysis; pyruvate from D-glyceraldehyde 3-phosphate: step 2/5. Essential for sperm motility and male fertility. Not required for the completion of spermatogenesis. The protein is Phosphoglycerate kinase 2 (PGK2) of Homo sapiens (Human).